Consider the following 391-residue polypeptide: ATP-sensitive inward rectifier potassium channel 1 (391 aa).

The Cytoplasmic portion of the chain corresponds to 1 to 77; that stretch reads MGASERSVFR…IWTTVLDLKW (77 aa). S44 carries the post-translational modification Phosphoserine; by SGK1. A helical transmembrane segment spans residues 78–102; the sequence is RYKMTVFITAFLGSWFLFGLLWYVV. Residues 103 to 127 are Extracellular-facing; sequence AYVHKDLPEFYPPDNRTPCVENING. Residue N117 is glycosylated (N-linked (GlcNAc...) asparagine). The helical; Pore-forming intramembrane region spans 128 to 139; it reads MTSAFLFSLETQ. The segment at residues 140–146 is an intramembrane region (pore-forming); that stretch reads VTIGYGF. The Selectivity filter signature appears at 141–146; that stretch reads TIGYGF. At 147–155 the chain is on the extracellular side; it reads RFVTEQCAT. A helical membrane pass occupies residues 156 to 177; it reads AIFLLIFQSILGVIINSFMCGA. Residues 178-391 are Cytoplasmic-facing; that stretch reads ILAKISRPKK…EVDETDDTQM (214 aa). The polyphosphoinositide (PIP2)-binding stretch occupies residues 180–207; the sequence is AKISRPKKRAKTITFSKNAVISKRGGKL. 223-230 contacts ATP; sequence GSHIYGKL.

This sequence belongs to the inward rectifier-type potassium channel (TC 1.A.2.1) family. KCNJ1 subfamily. Interacts with SGK1 and SLC9A3R2/NHERF2. In terms of processing, phosphorylation at Ser-44 by SGK1 is necessary for its expression at the cell membrane. As to expression, mainly in kidney (renal cortex, medulla and papilla). In terms of tissue distribution, kidney.

The protein localises to the cell membrane. The catalysed reaction is K(+)(in) = K(+)(out). With respect to regulation, inhibited by WNK3. Activated by phosphatidylinositol 4,5 biphosphate (PtdIns(4,5)P2). Inward rectifier potassium channels are characterized by a greater tendency to allow potassium to flow into the cell rather than out of it. Their voltage dependence is regulated by the concentration of extracellular potassium; as external potassium is raised, the voltage range of the channel opening shifts to more positive voltages. The inward rectification is mainly due to the blockage of outward current by internal magnesium. This channel is activated by internal ATP and can be blocked by external barium. In the kidney, probably plays a major role in potassium homeostasis. Its function is as follows. Inward rectifier potassium channels are characterized by a greater tendency to allow potassium to flow into the cell rather than out of it. Their voltage dependence is regulated by the concentration of extracellular potassium; as external potassium is raised, the voltage range of the channel opening shifts to more positive voltages. The protein is ATP-sensitive inward rectifier potassium channel 1 (Kcnj1) of Rattus norvegicus (Rat).